We begin with the raw amino-acid sequence, 210 residues long: Large ribosomal subunit protein uL4 (210 aa).

Residues 56–80 (FVSGGGKKPWRQKGTGRARAGSTRS) form a disordered region.

The protein belongs to the universal ribosomal protein uL4 family. As to quaternary structure, part of the 50S ribosomal subunit.

Functionally, one of the primary rRNA binding proteins, this protein initially binds near the 5'-end of the 23S rRNA. It is important during the early stages of 50S assembly. It makes multiple contacts with different domains of the 23S rRNA in the assembled 50S subunit and ribosome. In terms of biological role, forms part of the polypeptide exit tunnel. This Solidesulfovibrio magneticus (strain ATCC 700980 / DSM 13731 / RS-1) (Desulfovibrio magneticus) protein is Large ribosomal subunit protein uL4.